The primary structure comprises 64 residues: Large ribosomal subunit protein uL29 (64 aa).

The protein belongs to the universal ribosomal protein uL29 family.

In Cupriavidus necator (strain ATCC 17699 / DSM 428 / KCTC 22496 / NCIMB 10442 / H16 / Stanier 337) (Ralstonia eutropha), this protein is Large ribosomal subunit protein uL29.